The sequence spans 251 residues: 5'-nucleotidase SurE (251 aa).

Residues D8, D9, S39, and N91 each coordinate a divalent metal cation.

Belongs to the SurE nucleotidase family. The cofactor is a divalent metal cation.

It is found in the cytoplasm. The enzyme catalyses a ribonucleoside 5'-phosphate + H2O = a ribonucleoside + phosphate. In terms of biological role, nucleotidase that shows phosphatase activity on nucleoside 5'-monophosphates. The sequence is that of 5'-nucleotidase SurE from Thioalkalivibrio sulfidiphilus (strain HL-EbGR7).